The chain runs to 187 residues: Ribosome-recycling factor (187 aa).

Belongs to the RRF family.

It is found in the cytoplasm. Functionally, responsible for the release of ribosomes from messenger RNA at the termination of protein biosynthesis. May increase the efficiency of translation by recycling ribosomes from one round of translation to another. In Rhodopseudomonas palustris (strain BisB5), this protein is Ribosome-recycling factor.